We begin with the raw amino-acid sequence, 280 residues long: 4-diphosphocytidyl-2-C-methyl-D-erythritol kinase (280 aa).

The active site involves Lys8. Residue 91–101 coordinates ATP; sequence PVSAGLAGGSS. Asp133 is an active-site residue.

The protein belongs to the GHMP kinase family. IspE subfamily.

The enzyme catalyses 4-CDP-2-C-methyl-D-erythritol + ATP = 4-CDP-2-C-methyl-D-erythritol 2-phosphate + ADP + H(+). The protein operates within isoprenoid biosynthesis; isopentenyl diphosphate biosynthesis via DXP pathway; isopentenyl diphosphate from 1-deoxy-D-xylulose 5-phosphate: step 3/6. Its function is as follows. Catalyzes the phosphorylation of the position 2 hydroxy group of 4-diphosphocytidyl-2C-methyl-D-erythritol. The protein is 4-diphosphocytidyl-2-C-methyl-D-erythritol kinase of Clostridium novyi (strain NT).